We begin with the raw amino-acid sequence, 281 residues long: 2,3,4,5-tetrahydropyridine-2,6-dicarboxylate N-succinyltransferase (281 aa).

2 residues coordinate substrate: R108 and D145.

This sequence belongs to the transferase hexapeptide repeat family. As to quaternary structure, homotrimer.

It localises to the cytoplasm. The enzyme catalyses (S)-2,3,4,5-tetrahydrodipicolinate + succinyl-CoA + H2O = (S)-2-succinylamino-6-oxoheptanedioate + CoA. The protein operates within amino-acid biosynthesis; L-lysine biosynthesis via DAP pathway; LL-2,6-diaminopimelate from (S)-tetrahydrodipicolinate (succinylase route): step 1/3. This is 2,3,4,5-tetrahydropyridine-2,6-dicarboxylate N-succinyltransferase from Rhodopseudomonas palustris (strain BisA53).